We begin with the raw amino-acid sequence, 60 residues long: MDHRLLEIIACPVCNGKLWYNQEQQELICKLDNLAFPLRDGIPVLLENEARALTSDESKS.

The protein belongs to the UPF0434 family.

The polypeptide is UPF0434 protein YcaR (Salmonella agona (strain SL483)).